The primary structure comprises 527 residues: Berberine bridge enzyme-like 10 (527 aa).

Residues 1 to 20 (MEKLLVISLLLLISTSVTTS) form the signal peptide. Cysteine 32 and cysteine 95 are joined by a disulfide. Asparagine 53 carries N-linked (GlcNAc...) asparagine glycosylation. The FAD-binding PCMH-type domain maps to 73–248 (TTPKPISVVA…LGYKIQLVPV (176 aa)). Histidine 110 carries the pros-8alpha-FAD histidine modification. N-linked (GlcNAc...) asparagine glycosylation is found at asparagine 137 and asparagine 293.

The protein belongs to the oxygen-dependent FAD-linked oxidoreductase family. Requires FAD as cofactor.

It localises to the secreted. Its subcellular location is the cell wall. The chain is Berberine bridge enzyme-like 10 from Arabidopsis thaliana (Mouse-ear cress).